The primary structure comprises 348 residues: Fe-S cluster assembly protein DRE2 (348 aa).

Residues 1–158 (MSQYKTGLLL…LPTFKKASSS (158 aa)) are N-terminal SAM-like domain. Residues 137–170 (KTNNTKLQSGSKLPTFKKASSSTSNLPSFKKADH) form a disordered region. Residues 144–163 (QSGSKLPTFKKASSSTSNLP) are compositionally biased toward polar residues. The interval 159–242 (TSNLPSFKKA…EEELIDEDGS (84 aa)) is linker. At Ser-206 the chain carries Phosphoserine. [2Fe-2S] cluster-binding residues include Cys-252, Cys-263, Cys-266, and Cys-268. The interval 252–268 (CGKSKTKKKKACKDCTC) is fe-S binding site A. The [4Fe-4S] cluster site is built by Cys-311, Cys-314, Cys-322, and Cys-325. 2 short sequence motifs (cx2C motif) span residues 311–314 (CGSC) and 322–325 (CSGC). The tract at residues 311–325 (CGSCSLGDAFRCSGC) is fe-S binding site B.

It belongs to the anamorsin family. In terms of assembly, monomer. Interacts with TAH18. Interacts with MIA40. Requires [2Fe-2S] cluster as cofactor. [4Fe-4S] cluster is required as a cofactor. In terms of processing, ubiquitinated.

Its subcellular location is the cytoplasm. It is found in the mitochondrion intermembrane space. Functionally, component of the cytosolic iron-sulfur (Fe-S) protein assembly (CIA) machinery required for the maturation of extramitochondrial Fe-S proteins. Part of an electron transfer chain functioning in an early step of cytosolic Fe-S biogenesis, facilitating the de novo assembly of a [4Fe-4S] cluster on the scaffold complex CFD1-NBP35. Electrons are transferred to DRE2 from NADPH via the FAD- and FMN-containing protein TAH18. TAH18-DRE2 are also required for the assembly of the diferric tyrosyl radical cofactor of ribonucleotide reductase (RNR), probably by providing electrons for reduction during radical cofactor maturation in the catalytic small subunit RNR2. Has anti-apoptotic effects in the cell. Involved in negative control of H(2)O(2)-induced cell death. The chain is Fe-S cluster assembly protein DRE2 from Saccharomyces cerevisiae (strain ATCC 204508 / S288c) (Baker's yeast).